A 231-amino-acid polypeptide reads, in one-letter code: LexA repressor (231 aa).

Residues 1 to 24 form a disordered region; the sequence is MTDRKEHKMKPGRRPTEGMTPSQE. The H-T-H motif DNA-binding region spans 43 to 62; sequence VKEIAEALGMKTPSAHEQVQ. Residues Ser146 and Lys183 each act as for autocatalytic cleavage activity in the active site.

Belongs to the peptidase S24 family. Homodimer.

The enzyme catalyses Hydrolysis of Ala-|-Gly bond in repressor LexA.. Functionally, represses a number of genes involved in the response to DNA damage (SOS response), including recA and lexA. In the presence of single-stranded DNA, RecA interacts with LexA causing an autocatalytic cleavage which disrupts the DNA-binding part of LexA, leading to derepression of the SOS regulon and eventually DNA repair. This Magnetococcus marinus (strain ATCC BAA-1437 / JCM 17883 / MC-1) protein is LexA repressor.